Reading from the N-terminus, the 187-residue chain is Corticoliberin (187 aa).

The N-terminal stretch at 1 to 19 (MRLRLLVSAGMLLVALSSC) is a signal peptide. Residues 20–144 (LPCRALLSRG…HQGALERERR (125 aa)) constitute a propeptide that is removed on maturation. 2 disordered regions span residues 75-94 (AARL…SRPS) and 114-146 (QRSL…RRSE). Positions 117–129 (LDSRAEPAERGAE) are enriched in basic and acidic residues. The residue at position 185 (Ile185) is an Isoleucine amide.

The protein belongs to the sauvagine/corticotropin-releasing factor/urotensin I family. Interacts (via C-terminus) with CRFR1 (via N-terminal extracellular domain). As to expression, expressed in parvocellular paraventricular nucleus of the hypothalamus and in medial accessory olivary nucleus.

It is found in the secreted. In terms of biological role, hormone regulating the release of corticotropin from pituitary gland. Induces NLRP6 in intestinal epithelial cells, hence may influence gut microbiota profile. The sequence is that of Corticoliberin (Crh) from Mus musculus (Mouse).